Consider the following 201-residue polypeptide: Adenylyl-sulfate kinase (201 aa).

The segment at methionine 1–histidine 23 is disordered. Glycine 35–serine 42 contributes to the ATP binding site. The active-site Phosphoserine intermediate is serine 109.

This sequence belongs to the APS kinase family.

It carries out the reaction adenosine 5'-phosphosulfate + ATP = 3'-phosphoadenylyl sulfate + ADP + H(+). Its pathway is sulfur metabolism; hydrogen sulfide biosynthesis; sulfite from sulfate: step 2/3. Functionally, catalyzes the synthesis of activated sulfate. The polypeptide is Adenylyl-sulfate kinase (Escherichia coli O6:K15:H31 (strain 536 / UPEC)).